The sequence spans 309 residues: MKIVFMGTPDFAVPSLKSLINEFGVEAVFTQPDRPKGRGKKLGMSPVKEVALEHNIPVYQPLRLKNEPETIEELKNMEPDFIIVVAFGQILPKEVLDIPKYGCINLHASLLPKFRGAAPLNWSIIKGEKVTGNTTMLMDVGLDTGDMLLKDEVEITDNMTAGELHDILMERGGELLVRTIKGILNNEITPEKQNEEETCYAPMLNKEIAKIDWSLSAQDIHNLVRGLNPWPVALTSYDDITMKVHQTRVEKGDSNKEPGTIISVDKTGIKVSTGKDILVIEKLQFPNSKQLFVEQFINGNSVEIGKVLK.

S109 to P112 contributes to the (6S)-5,6,7,8-tetrahydrofolate binding site.

It belongs to the Fmt family.

It catalyses the reaction L-methionyl-tRNA(fMet) + (6R)-10-formyltetrahydrofolate = N-formyl-L-methionyl-tRNA(fMet) + (6S)-5,6,7,8-tetrahydrofolate + H(+). Its function is as follows. Attaches a formyl group to the free amino group of methionyl-tRNA(fMet). The formyl group appears to play a dual role in the initiator identity of N-formylmethionyl-tRNA by promoting its recognition by IF2 and preventing the misappropriation of this tRNA by the elongation apparatus. In Clostridium perfringens (strain 13 / Type A), this protein is Methionyl-tRNA formyltransferase.